Reading from the N-terminus, the 266-residue chain is 2-dehydro-3-deoxy-D-gluconate/2-dehydro-3-deoxy-phosphogluconate aldolase (266 aa).

Substrate contacts are provided by residues 36–37, 123–125, and 151–153; these read ST, YNI, and KDS. The Schiff-base intermediate with substrate role is filled by Lys-151.

The protein belongs to the DapA family. KDPG aldolase subfamily. As to quaternary structure, homotetramer; dimer of dimers.

The enzyme catalyses 2-dehydro-3-deoxy-6-phospho-D-gluconate = D-glyceraldehyde 3-phosphate + pyruvate. The catalysed reaction is 2-dehydro-3-deoxy-D-gluconate = D-glyceraldehyde + pyruvate. It catalyses the reaction 2-dehydro-3-deoxy-6-phospho-D-galactonate = D-glyceraldehyde 3-phosphate + pyruvate. It carries out the reaction 2-dehydro-3-deoxy-D-galactonate = D-glyceraldehyde + pyruvate. The protein operates within carbohydrate acid metabolism; 2-dehydro-3-deoxy-D-gluconate degradation; D-glyceraldehyde 3-phosphate and pyruvate from 2-dehydro-3-deoxy-D-gluconate: step 2/2. Its function is as follows. Involved in the degradation of glucose via the Entner-Doudoroff pathway. Catalyzes the reversible cleavage of 2-keto-3-deoxy-6-phosphogluconate (KDPG) and 2-keto-3-deoxygluconate (KDG) forming pyruvate and glyceraldehyde 3-phosphate or glyceraldehyde, respectively. It is also able to catalyze the reversible cleavage of 2-keto-3-deoxy-6-phosphogalactonate (KDPGal) and 2-keto-3-deoxygalactonate (KDGal). It is equally active with both D- and L-glyceraldehyde. The chain is 2-dehydro-3-deoxy-D-gluconate/2-dehydro-3-deoxy-phosphogluconate aldolase from Picrophilus torridus (strain ATCC 700027 / DSM 9790 / JCM 10055 / NBRC 100828 / KAW 2/3).